Reading from the N-terminus, the 388-residue chain is Processive diacylglycerol beta-glucosyltransferase (388 aa).

The protein belongs to the glycosyltransferase 28 family. UgtP subfamily.

It is found in the cell membrane. The enzyme catalyses a 1,2-diacyl-3-O-(beta-D-glucopyranosyl)-sn-glycerol + UDP-alpha-D-glucose = a 1,2-diacyl-3-O-(beta-D-Glc-(1-&gt;6)-beta-D-Glc)-sn-glycerol + UDP + H(+). It carries out the reaction a 1,2-diacyl-3-O-(beta-D-Glc-(1-&gt;6)-beta-D-Glc)-sn-glycerol + UDP-alpha-D-glucose = a 1,2-diacyl-3-O-(beta-D-Glc-(1-&gt;6)-beta-D-Glc-(1-&gt;6)-beta-D-Glc)-sn-glycerol + UDP + H(+). It catalyses the reaction a 1,2-diacyl-sn-glycerol + UDP-alpha-D-glucose = a 1,2-diacyl-3-O-(beta-D-glucopyranosyl)-sn-glycerol + UDP + H(+). The protein operates within glycolipid metabolism; diglucosyl-diacylglycerol biosynthesis. In terms of biological role, processive glucosyltransferase involved in the biosynthesis of both the bilayer- and non-bilayer-forming membrane glucolipids. Is able to successively transfer up to three glucosyl residues to diacylglycerol (DAG), thereby catalyzing the formation of beta-monoglucosyl-DAG (3-O-(beta-D-glucopyranosyl)-1,2-diacyl-sn-glycerol), beta-diglucosyl-DAG (3-O-(beta-D-glucopyranosyl-beta-(1-&gt;6)-D-glucopyranosyl)-1,2-diacyl-sn-glycerol) and beta-triglucosyl-DAG (3-O-(beta-D-glucopyranosyl-beta-(1-&gt;6)-D-glucopyranosyl-beta-(1-&gt;6)-D-glucopyranosyl)-1,2-diacyl-sn-glycerol). Beta-diglucosyl-DAG is the predominant glycolipid found in Bacillales and is also used as a membrane anchor for lipoteichoic acid (LTA). The sequence is that of Processive diacylglycerol beta-glucosyltransferase from Bacillus cereus (strain ATCC 10987 / NRS 248).